Consider the following 579-residue polypeptide: Carotenoid-cleaving dioxygenase, mitochondrial (579 aa).

Residues His-226, His-286, His-357, and His-573 each coordinate Fe cation.

It belongs to the carotenoid oxygenase family. Fe(2+) is required as a cofactor. Highly expressed in retinal pigment epithelium. Also expressed in stomach, small intestine, liver, testis, kidney, adrenal gland, pancreas, heart, skeletal muscle and prostate (at protein level).

It localises to the mitochondrion. It catalyses the reaction all-trans-beta-carotene + O2 = beta-ionone + all-trans-10'-apo-beta-carotenal. The catalysed reaction is 5-cis-lycopene + O2 = 5-cis-10'-apo-lycopenal + (3E,5E)-6,10-dimethylundeca-3,5,9-trien-2-one. The enzyme catalyses 13-cis-lycopene + O2 = 13-cis-10'-apo-lycopenal + (3E,5E)-6,10-dimethylundeca-3,5,9-trien-2-one. It carries out the reaction lutein + O2 = (3R,6R)-hydroxy-alpha-ionone + (3R)-3-hydroxy-10'-apo-beta-carotenal. It catalyses the reaction lutein + O2 = (3R,6R)-3-hydroxy-10'-apo-alpha-carotenal + (3R)-hydroxy-beta-ionone. The catalysed reaction is all-trans-zeaxanthin + 2 O2 = 4,9-dimethyldodeca-2,4,6,8,10-pentaenedial + 2 (3R)-hydroxy-beta-ionone. The enzyme catalyses all-trans-zeaxanthin + O2 = (3R)-3-hydroxy-10'-apo-beta-carotenal + (3R)-hydroxy-beta-ionone. It carries out the reaction beta-cryptoxanthin + O2 = all-trans-10'-apo-beta-carotenal + (3R)-hydroxy-beta-ionone. It catalyses the reaction all-trans-10'-apo-beta-carotenal + O2 = beta-ionone + 4,9-dimethyldodeca-2,4,6,8,10-pentaenedial. The catalysed reaction is (3R)-3-hydroxy-10'-apo-beta-carotenal + O2 = 4,9-dimethyldodeca-2,4,6,8,10-pentaenedial + (3R)-hydroxy-beta-ionone. The enzyme catalyses (3R,6R)-3-hydroxy-10'-apo-alpha-carotenal + O2 = (3R,6R)-hydroxy-alpha-ionone + 4,9-dimethyldodeca-2,4,6,8,10-pentaenedial. Its function is as follows. Broad specificity mitochondrial dioxygenase that mediates the asymmetric oxidative cleavage of carotenoids. Cleaves carotenes (pure hydrocarbon carotenoids) such as all-trans-beta-carotene and lycopene as well as xanthophylls (oxygenated carotenoids) such as zeaxanthin, lutein and beta-cryptoxanthin at both the 9,10 and the 9',10' carbon-carbon double bond. Through its function in carotenoids metabolism regulates oxidative stress and the production of important signaling molecules. The chain is Carotenoid-cleaving dioxygenase, mitochondrial from Homo sapiens (Human).